Here is a 189-residue protein sequence, read N- to C-terminus: Capsid protein (189 aa).

An N-acetylmethionine; by host modification is found at Met-1.

Belongs to the tymoviruses capsid protein family.

It localises to the virion. In terms of biological role, self-assembles to form a T=3 icosahedral capsid composed of 180 copies of the capsid protein. The capsid encapsulates the single-stranded RNA genome. A pentameric unit may be lost during decapsidation. The protein is Capsid protein of Brassica (Chinese cabbage).